A 351-amino-acid chain; its full sequence is Methionine import ATP-binding protein MetN (351 aa).

One can recognise an ABC transporter domain in the interval 2-241; the sequence is IVTEALTKAF…PQHAVTRAFV (240 aa). 38–45 contributes to the ATP binding site; the sequence is GRSGAGKS.

This sequence belongs to the ABC transporter superfamily. Methionine importer (TC 3.A.1.24) family. As to quaternary structure, the complex is composed of two ATP-binding proteins (MetN), two transmembrane proteins (MetI) and a solute-binding protein (MetQ).

Its subcellular location is the cell inner membrane. It catalyses the reaction L-methionine(out) + ATP + H2O = L-methionine(in) + ADP + phosphate + H(+). It carries out the reaction D-methionine(out) + ATP + H2O = D-methionine(in) + ADP + phosphate + H(+). Functionally, part of the ABC transporter complex MetNIQ involved in methionine import. Responsible for energy coupling to the transport system. In Rhodospirillum rubrum (strain ATCC 11170 / ATH 1.1.1 / DSM 467 / LMG 4362 / NCIMB 8255 / S1), this protein is Methionine import ATP-binding protein MetN.